The following is a 125-amino-acid chain: uncharacterized protein (125 aa).

An HTH dtxR-type domain is found at 1–63 (MSQSIEDYLE…YEPYIGITLT (63 aa)).

This sequence belongs to the DtxR/MntR family.

This is an uncharacterized protein from Methanocaldococcus jannaschii (strain ATCC 43067 / DSM 2661 / JAL-1 / JCM 10045 / NBRC 100440) (Methanococcus jannaschii).